The primary structure comprises 710 residues: Ephexin-1 (710 aa).

The segment covering 1–20 (METKNSEDWGKPQRKSESSS) has biased composition (basic and acidic residues). A disordered region spans residues 1–146 (METKNSEDWG…TPEECPALTD (146 aa)). A regulatory region; modulates activity toward RHOA, RAC1 and CDC42 region spans residues 1–272 (METKNSEDWG…VLDILQPEEI (272 aa)). The segment covering 123–137 (QEASESSSTPGNGTT) has biased composition (polar residues). Phosphotyrosine is present on Tyr-177. Residues 192–234 (RRQQDAEIQGNSDGSQVGEDAGEEEEEEEEGEEEELASPPERR) are disordered. Positions 211–227 (DAGEEEEEEEEGEEEEL) are enriched in acidic residues. The DH domain maps to 273–457 (RLQEAMFELV…EMVVKACNEG (185 aa)). The PH domain occupies 489–601 (WLLKQGELQQ…WMTSLAPNRR (113 aa)). The 62-residue stretch at 612 to 673 (LDCPQVQCVH…PSSMTEEILN (62 aa)) folds into the SH3 domain. Over residues 688–699 (HKMEDPQRSQNK) the composition is skewed to basic and acidic residues. The disordered stretch occupies residues 688-710 (HKMEDPQRSQNKDRRKLGSRNRQ). Basic residues predominate over residues 700–710 (DRRKLGSRNRQ).

Interacts with CDK5R1 and EPHA4; activated by EPHA4 through the CDK5 kinase. In terms of processing, src-dependent phosphorylation at Tyr-177 upon EPHA4 activation increases the guanine exchange factor activity toward RHOA. Phosphorylation by CDK5 upon EPHA4 activation by EFNA1 may regulate dendritic spine morphogenesis. In terms of tissue distribution, highly expressed in brain and to a lower extent in eye.

It localises to the cytoplasm. The protein resides in the membrane. Its subcellular location is the cell projection. The protein localises to the growth cone. Acts as a guanine nucleotide exchange factor (GEF) which differentially activates the GTPases RHOA, RAC1 and CDC42. Plays a role in axon guidance regulating ephrin-induced growth cone collapse and dendritic spine morphogenesis. Upon activation by ephrin through EPHA4, the GEF activity switches toward RHOA resulting in its activation. Activated RHOA promotes cone retraction at the expense of RAC1- and CDC42-stimulated growth cone extension. This Mus musculus (Mouse) protein is Ephexin-1 (Ngef).